The primary structure comprises 369 residues: 2-aminoethylphosphonate--pyruvate transaminase (369 aa).

The residue at position 193 (K193) is an N6-(pyridoxal phosphate)lysine.

This sequence belongs to the class-V pyridoxal-phosphate-dependent aminotransferase family. PhnW subfamily. Homodimer. Pyridoxal 5'-phosphate serves as cofactor.

It catalyses the reaction (2-aminoethyl)phosphonate + pyruvate = phosphonoacetaldehyde + L-alanine. Functionally, involved in phosphonate degradation. This is 2-aminoethylphosphonate--pyruvate transaminase from Pseudomonas fluorescens (strain ATCC BAA-477 / NRRL B-23932 / Pf-5).